Reading from the N-terminus, the 189-residue chain is Cancer/testis antigen family 45 member A5 (189 aa).

Residues 1–23 (MTDKTEKVAVDPETVFKRPRECD) are compositionally biased toward basic and acidic residues. Disordered regions lie at residues 1–27 (MTDK…SPSY) and 82–118 (DGMM…SPKS).

Belongs to the CT45 family. As to expression, testis specific. Expressed in cancer cell lines.

Its subcellular location is the nucleus. In Homo sapiens (Human), this protein is Cancer/testis antigen family 45 member A5.